The chain runs to 332 residues: Anthranilate phosphoribosyltransferase (332 aa).

5-phospho-alpha-D-ribose 1-diphosphate-binding positions include Gly-79, 82–83 (GD), Thr-87, 89–92 (NIST), 107–115 (KHGNRGVSS), and Ser-119. An anthranilate-binding site is contributed by Gly-79. Residue Ser-91 coordinates Mg(2+). Asn-110 lines the anthranilate pocket. An anthranilate-binding site is contributed by Arg-165. The Mg(2+) site is built by Asp-223 and Glu-224.

Belongs to the anthranilate phosphoribosyltransferase family. As to quaternary structure, homodimer. The cofactor is Mg(2+).

It catalyses the reaction N-(5-phospho-beta-D-ribosyl)anthranilate + diphosphate = 5-phospho-alpha-D-ribose 1-diphosphate + anthranilate. Its pathway is amino-acid biosynthesis; L-tryptophan biosynthesis; L-tryptophan from chorismate: step 2/5. In terms of biological role, catalyzes the transfer of the phosphoribosyl group of 5-phosphorylribose-1-pyrophosphate (PRPP) to anthranilate to yield N-(5'-phosphoribosyl)-anthranilate (PRA). In Vibrio cholerae serotype O1 (strain ATCC 39541 / Classical Ogawa 395 / O395), this protein is Anthranilate phosphoribosyltransferase.